Consider the following 89-residue polypeptide: Small ribosomal subunit protein uS15 (89 aa).

Belongs to the universal ribosomal protein uS15 family. In terms of assembly, part of the 30S ribosomal subunit. Forms a bridge to the 50S subunit in the 70S ribosome, contacting the 23S rRNA.

In terms of biological role, one of the primary rRNA binding proteins, it binds directly to 16S rRNA where it helps nucleate assembly of the platform of the 30S subunit by binding and bridging several RNA helices of the 16S rRNA. Functionally, forms an intersubunit bridge (bridge B4) with the 23S rRNA of the 50S subunit in the ribosome. This chain is Small ribosomal subunit protein uS15, found in Shewanella baltica (strain OS223).